A 239-amino-acid polypeptide reads, in one-letter code: Calcium load-activated calcium channel (239 aa).

The Lumenal portion of the chain corresponds to 1–55; it reads MPRKRKCDLRAVRVGLLLGGGGVYGSRFRFTFPGCRALSPWRVRVQRRRCEMSTM. A helical membrane pass occupies residues 56–83; the sequence is FADTLLIVFISVCTALLAEGITWVLVYR. Residues 83–140 adopt a coiled-coil conformation; the sequence is RTDKYKRLKAEVEKQSKKLEKKKETITESAGRQQKKKIERQEEKLKNNNRDLSMVRMK. Residues 84–137 are Cytoplasmic-facing; it reads TDKYKRLKAEVEKQSKKLEKKKETITESAGRQQKKKIERQEEKLKNNNRDLSMV. Ser-111 carries the phosphoserine modification. Residues 138-157 traverse the membrane as a helical segment; it reads RMKSMFAIGFCFTALMGMFN. The Lumenal portion of the chain corresponds to 158–171; that stretch reads SIFDGRVVAKLPFT. An intramembrane segment occupies 172–181; that stretch reads PLSYIQGLSH. The Lumenal portion of the chain corresponds to 182–191; that stretch reads RNLLGDDTTD. The helical transmembrane segment at 192 to 213 threads the bilayer; that stretch reads CSFIFLYILCTMSIRQNIQKIL. The Cytoplasmic portion of the chain corresponds to 214-239; the sequence is GLAPSRAATKQAGGFLGPPPPSGKFS. Phosphoserine is present on Ser-239.

It belongs to the TMCO1 family. In terms of assembly, homodimer and homotetramer. Homodimer under resting conditions; forms homotetramers following ER calcium overload. Component of the GET- and EMC-like (GEL) complex, composed of RAB5IF/OPTI and TMCO1. The GEL complex is part of the multi-pass translocon (MPT) complex, composed of three subcomplexes, the GEL complex (composed of RAB5IF/OPTI and TMCO1), the BOS complex (composed of NCLN/Nicalin, NOMO and TMEM147) and the PAT complex (composed of WDR83OS/Asterix and CCDC47). The MPT complex associates with the SEC61 complex. Widely expressed in adult and fetal tissues, with higher levels in thymus, prostate, testis and small intestine and lower levels in brain, placenta, lung and kidney. Present in most tissues in the eye, including the trabecular meshwork and retina (at protein level).

It is found in the endoplasmic reticulum membrane. The protein localises to the golgi apparatus membrane. It localises to the mitochondrion membrane. The catalysed reaction is Ca(2+)(in) = Ca(2+)(out). Its function is as follows. Endoplasmic reticulum (ER) calcium-selective channel preventing intracellular Ca2(+) stores from overfilling and maintaining calcium homeostasis in the ER. In response to endoplasmic reticulum (ER) Ca2(+) overloading, assembles into a homotetramer, forming a functional calcium-selective channel facilitating Ca2(+) release. Mediates ER Ca2(+) homeostasis in osteoblasts and plays a key role in bone formation, via the CaMKII-HDAC4-RUNX2 signaling axis. Component of the multi-pass translocon (MPT) complex that mediates insertion of multi-pass membrane proteins into the lipid bilayer of membranes. The MPT complex takes over after the SEC61 complex: following membrane insertion of the first few transmembrane segments of proteins by the SEC61 complex, the MPT complex occludes the lateral gate of the SEC61 complex to promote insertion of subsequent transmembrane regions. Within the MPT complex, the GEL subcomplex may mediate insertion of transmembrane regions into the membrane. This is Calcium load-activated calcium channel from Homo sapiens (Human).